The following is a 362-amino-acid chain: Endopolygalacturonase II (362 aa).

Residues 1-20 form the signal peptide; the sequence is MHSFASLLRYGLAAGATLAS. Positions 21 to 27 are excised as a propeptide; sequence ASPIEAR. A disulfide bridge links Cys-30 with Cys-45. The stretch at 156 to 186 is one PbH1 1 repeat; it reads SDDITLTDITINNADGDSLGGHNTDAFDVGN. Asp-201 serves as the catalytic Proton donor. Cysteines 203 and 219 form a disulfide. 4 PbH1 repeats span residues 209 to 229, 238 to 259, 267 to 289, and 301 to 322; these read GENI…SIGS, VKNV…RIKT, VSEI…VIQQ, and TNGV…DSKA. His-223 is a catalytic residue. The N-linked (GlcNAc...) asparagine glycan is linked to Asn-240. 2 cysteine pairs are disulfide-bonded: Cys-329/Cys-334 and Cys-353/Cys-362.

Belongs to the glycosyl hydrolase 28 family.

The protein localises to the secreted. It catalyses the reaction (1,4-alpha-D-galacturonosyl)n+m + H2O = (1,4-alpha-D-galacturonosyl)n + (1,4-alpha-D-galacturonosyl)m.. Involved in maceration and soft-rotting of plant tissue. Hydrolyzes the 1,4-alpha glycosidic bonds of de-esterified pectate in the smooth region of the plant cell wall. The polypeptide is Endopolygalacturonase II (pgaII) (Aspergillus awamori (Black koji mold)).